Consider the following 178-residue polypeptide: Large ribosomal subunit protein bL25 (178 aa).

This sequence belongs to the bacterial ribosomal protein bL25 family. CTC subfamily. As to quaternary structure, part of the 50S ribosomal subunit; part of the 5S rRNA/L5/L18/L25 subcomplex. Contacts the 5S rRNA. Binds to the 5S rRNA independently of L5 and L18.

Its function is as follows. This is one of the proteins that binds to the 5S RNA in the ribosome where it forms part of the central protuberance. In Helicobacter acinonychis (strain Sheeba), this protein is Large ribosomal subunit protein bL25.